The primary structure comprises 734 residues: Ribosomal RNA large subunit methyltransferase K/L (734 aa).

The THUMP domain occupies 49–167; sequence HAYRICMWSR…KTEHTYCLDL (119 aa).

This sequence belongs to the methyltransferase superfamily. RlmKL family.

Its subcellular location is the cytoplasm. It carries out the reaction guanosine(2445) in 23S rRNA + S-adenosyl-L-methionine = N(2)-methylguanosine(2445) in 23S rRNA + S-adenosyl-L-homocysteine + H(+). It catalyses the reaction guanosine(2069) in 23S rRNA + S-adenosyl-L-methionine = N(2)-methylguanosine(2069) in 23S rRNA + S-adenosyl-L-homocysteine + H(+). In terms of biological role, specifically methylates the guanine in position 2445 (m2G2445) and the guanine in position 2069 (m7G2069) of 23S rRNA. The protein is Ribosomal RNA large subunit methyltransferase K/L of Acinetobacter baumannii (strain ACICU).